The following is an 842-amino-acid chain: Oligopeptide transporter phomP2' (842 aa).

The interval 1–58 (MEADPKVPFTDEMNIQDEHNWESGSWSSSRRSNDSNVTLLSRRSSVEQHEDERQKDSD) is disordered. Residues 23–36 (SGSWSSSRRSNDSN) show a composition bias toward low complexity. N-linked (GlcNAc...) asparagine glycosylation is found at N33 and N36. Over residues 44-58 (SSVEQHEDERQKDSD) the composition is skewed to basic and acidic residues. The next 6 membrane-spanning stretches (helical) occupy residues 105-125 (VWLL…VYYF), 177-197 (ALVV…GPLS), 210-230 (PWAI…VGLY), 268-288 (VFMA…FVFP), 315-335 (GFGL…SPLF), and 345-365 (FVGA…SDAL). N386 and N398 each carry an N-linked (GlcNAc...) asparagine glycan. Transmembrane regions (helical) follow at residues 415 to 435 (AMHF…AVLF), 478 to 498 (AWYA…LYAG), 505 to 525 (WGLQ…GMLF), and 585 to 605 (WELL…NWAV). Residues 629–649 (QGLGLGQGGGGGGGGGGGGGQ) are compositionally biased toward gly residues. Positions 629-657 (QGLGLGQGGGGGGGGGGGGGQQQRAAGAH) are disordered. Transmembrane regions (helical) follow at residues 668 to 688 (NFFS…FGGG), 700 to 720 (WLLP…WLIH), and 731 to 751 (WPLH…FPTT). N752 is a glycosylation site (N-linked (GlcNAc...) asparagine). Residues 784-804 (AGLDCGAQLVQMVLGLAFLVF) traverse the membrane as a helical segment.

It belongs to the oligopeptide OPT transporter family.

It is found in the membrane. Its function is as follows. Oligopeptide transporter; part of the gene cluster that mediates the biosynthesis of the phomopsins, a group of hexapeptide mycotoxins which infects lupins and causes lupinosis disease in livestock. This is Oligopeptide transporter phomP2' from Diaporthe leptostromiformis (Lupinosis disease fungus).